The following is a 275-amino-acid chain: Large ribosomal subunit protein uL2 (275 aa).

Positions 214–275 (RWRGNRPTVR…NKFILSHRNK (62 aa)) are disordered. A compositionally biased stretch (basic residues) spans 255–275 (KGKKTRSNKRTNKFILSHRNK).

The protein belongs to the universal ribosomal protein uL2 family. In terms of assembly, part of the 50S ribosomal subunit. Forms a bridge to the 30S subunit in the 70S ribosome.

In terms of biological role, one of the primary rRNA binding proteins. Required for association of the 30S and 50S subunits to form the 70S ribosome, for tRNA binding and peptide bond formation. It has been suggested to have peptidyltransferase activity; this is somewhat controversial. Makes several contacts with the 16S rRNA in the 70S ribosome. The chain is Large ribosomal subunit protein uL2 from Blochmanniella pennsylvanica (strain BPEN).